The sequence spans 96 residues: Aspartyl/glutamyl-tRNA(Asn/Gln) amidotransferase subunit C (96 aa).

Belongs to the GatC family. In terms of assembly, heterotrimer of A, B and C subunits.

It catalyses the reaction L-glutamyl-tRNA(Gln) + L-glutamine + ATP + H2O = L-glutaminyl-tRNA(Gln) + L-glutamate + ADP + phosphate + H(+). The enzyme catalyses L-aspartyl-tRNA(Asn) + L-glutamine + ATP + H2O = L-asparaginyl-tRNA(Asn) + L-glutamate + ADP + phosphate + 2 H(+). Functionally, allows the formation of correctly charged Asn-tRNA(Asn) or Gln-tRNA(Gln) through the transamidation of misacylated Asp-tRNA(Asn) or Glu-tRNA(Gln) in organisms which lack either or both of asparaginyl-tRNA or glutaminyl-tRNA synthetases. The reaction takes place in the presence of glutamine and ATP through an activated phospho-Asp-tRNA(Asn) or phospho-Glu-tRNA(Gln). The polypeptide is Aspartyl/glutamyl-tRNA(Asn/Gln) amidotransferase subunit C (Trichormus variabilis (strain ATCC 29413 / PCC 7937) (Anabaena variabilis)).